We begin with the raw amino-acid sequence, 96 residues long: Large ribosomal subunit protein uL23 (96 aa).

The protein belongs to the universal ribosomal protein uL23 family. In terms of assembly, part of the 50S ribosomal subunit. Contacts protein L29, and trigger factor when it is bound to the ribosome.

Its function is as follows. One of the early assembly proteins it binds 23S rRNA. One of the proteins that surrounds the polypeptide exit tunnel on the outside of the ribosome. Forms the main docking site for trigger factor binding to the ribosome. The polypeptide is Large ribosomal subunit protein uL23 (Finegoldia magna (strain ATCC 29328 / DSM 20472 / WAL 2508) (Peptostreptococcus magnus)).